Consider the following 333-residue polypeptide: NADH-quinone oxidoreductase subunit H (333 aa).

Helical transmembrane passes span 17-37, 88-108, 117-137, 159-179, 191-211, 241-261, 273-293, and 313-333; these read IFFA…TYGI, FILA…ALPF, IGVG…GVVT, ISYE…SGSL, VWFI…AVAE, FFML…TVLF, FIPG…LFIW, and VLLP…QLFF.

The protein belongs to the complex I subunit 1 family. NDH-1 is composed of 14 different subunits. Subunits NuoA, H, J, K, L, M, N constitute the membrane sector of the complex.

It localises to the cell membrane. It catalyses the reaction a quinone + NADH + 5 H(+)(in) = a quinol + NAD(+) + 4 H(+)(out). Functionally, NDH-1 shuttles electrons from NADH, via FMN and iron-sulfur (Fe-S) centers, to quinones in the respiratory chain. The immediate electron acceptor for the enzyme in this species is believed to be ubiquinone. Couples the redox reaction to proton translocation (for every two electrons transferred, four hydrogen ions are translocated across the cytoplasmic membrane), and thus conserves the redox energy in a proton gradient. This subunit may bind ubiquinone. This chain is NADH-quinone oxidoreductase subunit H, found in Anoxybacillus flavithermus (strain DSM 21510 / WK1).